A 149-amino-acid chain; its full sequence is 3-dehydroquinate dehydratase (149 aa).

Catalysis depends on Tyr-24, which acts as the Proton acceptor. 3 residues coordinate substrate: Asn-76, His-82, and Asp-89. The active-site Proton donor is the His-102. Substrate contacts are provided by residues 103 to 104 and Arg-113; that span reads LS.

Belongs to the type-II 3-dehydroquinase family. As to quaternary structure, homododecamer.

It carries out the reaction 3-dehydroquinate = 3-dehydroshikimate + H2O. Its pathway is metabolic intermediate biosynthesis; chorismate biosynthesis; chorismate from D-erythrose 4-phosphate and phosphoenolpyruvate: step 3/7. Functionally, catalyzes a trans-dehydration via an enolate intermediate. This chain is 3-dehydroquinate dehydratase, found in Acinetobacter baylyi (strain ATCC 33305 / BD413 / ADP1).